A 1018-amino-acid chain; its full sequence is Transmembrane protein 132A (1018 aa).

The N-terminal stretch at 1 to 32 (MTERKAAAPRGPYGAWFCLLVALALEVVRVSS) is a signal peptide. Topologically, residues 33 to 846 (NHDTLDPIYL…VTDLELGMYA (814 aa)) are extracellular. N-linked (GlcNAc...) asparagine glycosylation is present at Asn-276. The interval 606–911 (IEVRSPLSDA…QLDRCSSSGP (306 aa)) is binds to HSPA5/GRP78. The interval 666 to 1018 (LPAPKQEVAL…NYMERIRGSS (353 aa)) is confers cellular localization similar to full-length form. Residues 807-818 (ERAEEEAGKEEN) show a composition bias toward basic and acidic residues. The segment at 807 to 833 (ERAEEEAGKEENEAKEEEEDEEEMVPA) is disordered. Residues 819–830 (EAKEEEEDEEEM) are compositionally biased toward acidic residues. Residues 847-867 (LLGIFCLAILIFLVNGVVFVL) form a helical membrane-spanning segment. At 868–1018 (RYQRKEPPDS…NYMERIRGSS (151 aa)) the chain is on the cytoplasmic side. The interval 900-956 (SRQLDRCSSSGPPKGEGGCPCESGAGGDASTVAPSASESPAGSSSTLARKEAGGRRK) is disordered. 2 stretches are compositionally biased toward low complexity: residues 906–922 (CSSS…PCES) and 932–944 (APSA…GSSS).

The protein belongs to the TMEM132 family. In terms of assembly, interacts with HSPA5/GRP78.

The protein localises to the golgi apparatus membrane. Its subcellular location is the endoplasmic reticulum membrane. Its function is as follows. May play a role in embryonic and postnatal development of the brain. Increased resistance to cell death induced by serum starvation in cultured cells. Regulates cAMP-induced GFAP gene expression via STAT3 phosphorylation. The polypeptide is Transmembrane protein 132A (Tmem132a) (Mus musculus (Mouse)).